We begin with the raw amino-acid sequence, 203 residues long: MRVYSCHFCSSPVYPLHGIMFVRNDAKEFRFCRSKCHHAFKQRRNPRKLRWTKAFRKAAGKELVVDSTLTFAARRNVPVRYNRDLVATTLKTMARVEEIRQKRERAFYKNRMRGNKDKKLALDRRLVEQNPQLLKIRDVELRRKAERKAAKENAMDEEIEDEEEEIASEDMMSEDEEMESESEAESTKQKVVLKNKKKSKRSN.

The segment at 147–203 (RKAAKENAMDEEIEDEEEEIASEDMMSEDEEMESESEAESTKQKVVLKNKKKSKRSN) is disordered. Residues 155–184 (MDEEIEDEEEEIASEDMMSEDEEMESESEA) show a composition bias toward acidic residues. Residues 191 to 203 (VVLKNKKKSKRSN) show a composition bias toward basic residues.

The protein belongs to the eukaryotic ribosomal protein eL24 family. As to quaternary structure, associated with nucleolar and cytoplasmic pre-60S particles. At the end of biogenesis it dissociates from cytoplasmic pre-60S particles and is likely to be exchanged for its ribosomal homolog, RPL24.

It is found in the cytoplasm. It localises to the nucleus. In terms of biological role, involved in the biogenesis of the 60S ribosomal subunit. Ensures the docking of DEHA2D15950g/NOG1 to pre-60S particles. Activates and recruits ATPase AFG2 to cytoplasmic pre-60S ribosomal particles. The protein is Ribosome biogenesis protein RLP24 (RLP24) of Debaryomyces hansenii (strain ATCC 36239 / CBS 767 / BCRC 21394 / JCM 1990 / NBRC 0083 / IGC 2968) (Yeast).